We begin with the raw amino-acid sequence, 260 residues long: Serine protease VLSP-1 (260 aa).

The signal sequence occupies residues 1–18 (MVLIRVLANLLVLHLSYA). A propeptide spanning residues 19–24 (QKSSEL) is cleaved from the precursor. A Peptidase S1 domain is found at 25 to 251 (VIGGDECNIN…YSDWIQSIIA (227 aa)). Disulfide bonds link C31–C165, C52–C68, C100–C258, C144–C212, C176–C191, and C202–C227. N44 carries N-linked (GlcNAc...) asparagine glycosylation. The active-site Charge relay system is the H67. The N-linked (GlcNAc...) asparagine glycan is linked to N103. The active-site Charge relay system is D112. An N-linked (GlcNAc...) asparagine glycan is attached at N156. The active-site Charge relay system is the S206.

Belongs to the peptidase S1 family. Snake venom subfamily. In terms of tissue distribution, expressed by the venom gland.

Its subcellular location is the secreted. Functionally, snake venom serine protease that may act in the hemostasis system of the prey. This Macrovipera lebetinus (Levantine viper) protein is Serine protease VLSP-1.